The following is a 181-amino-acid chain: Dual-action ribosomal maturation protein DarP (181 aa).

This sequence belongs to the DarP family.

The protein localises to the cytoplasm. In terms of biological role, member of a network of 50S ribosomal subunit biogenesis factors which assembles along the 30S-50S interface, preventing incorrect 23S rRNA structures from forming. Promotes peptidyl transferase center (PTC) maturation. The chain is Dual-action ribosomal maturation protein DarP from Actinobacillus succinogenes (strain ATCC 55618 / DSM 22257 / CCUG 43843 / 130Z).